Consider the following 272-residue polypeptide: Tryptophan synthase alpha chain (272 aa).

Residues Glu49 and Asp60 each act as proton acceptor in the active site.

This sequence belongs to the TrpA family. As to quaternary structure, tetramer of two alpha and two beta chains.

It catalyses the reaction (1S,2R)-1-C-(indol-3-yl)glycerol 3-phosphate + L-serine = D-glyceraldehyde 3-phosphate + L-tryptophan + H2O. The protein operates within amino-acid biosynthesis; L-tryptophan biosynthesis; L-tryptophan from chorismate: step 5/5. Functionally, the alpha subunit is responsible for the aldol cleavage of indoleglycerol phosphate to indole and glyceraldehyde 3-phosphate. The chain is Tryptophan synthase alpha chain from Polaromonas naphthalenivorans (strain CJ2).